The chain runs to 588 residues: Progranulin (588 aa).

A signal peptide spans 1-17 (MWILVSWLALVARLVAG). Asn38 carries N-linked (GlcNAc...) asparagine glycosylation. Disulfide bonds link Cys125/Cys138, Cys132/Cys148, Cys281/Cys293, Cys287/Cys303, Cys294/Cys311, Cys304/Cys318, Cys312/Cys325, Cys319/Cys332, Cys363/Cys375, Cys369/Cys385, Cys394/Cys407, and Cys401/Cys413. Asn372 is a glycosylation site (N-linked (GlcNAc...) asparagine). Asn525 carries N-linked (GlcNAc...) asparagine glycosylation.

This sequence belongs to the granulin family. As to quaternary structure, progranulin is secreted as a homodimer. Interacts with SLPI; interaction protects progranulin from proteolysis. Interacts (via region corresponding to granulin-7 peptide) with CTSD; stabilizes CTSD and increases its proteolytic activity. Interacts (via region corresponding to granulin-7 peptide) with SORT1; this interaction mediates endocytosis and lysosome delivery of progranulin; interaction occurs at the neuronal cell surface in a stressed nervous system. Interacts with PSAP; facilitates lysosomal delivery of progranulin from the extracellular space and the biosynthetic pathway. Forms a complex with PSAP and M6PR; PSAP bridges the binding between progranulin and M6PR. Forms a complex with PSAP and SORT1; progranulin bridges the interaction between PSAP and SORT1; facilitates lysosomal targeting of PSAP via SORT1; interaction enhances PSAP uptake in primary cortical neurons. Interacts (via regions corresponding to granulin-2 and granulin-7 peptides) with GBA1; this interaction prevents aggregation of GBA1-SCARB2 complex via interaction with HSPA1A upon stress. Interacts (via region corresponding to granulin-7 peptide) with HSPA1A; mediates recruitment of HSPA1A to GBA1 and prevents GBA1 aggregation in response to stress. Post-translationally, cleaved by ELANE; proteolysis is blocked by SLPI and is concentration- and time-dependent and induces CXCL8/IL-8 production; granulin-3 and granulin-4 are resistant to ELANE. Cleaved by CTSL in lysosome thus regulating the maturation and turnover of progranulin within the lysosome. As to expression, ubiquitous; most abundant in the spleen and several tissues of endocrine significance.

Its subcellular location is the secreted. It localises to the lysosome. Its function is as follows. Secreted protein that acts as a key regulator of lysosomal function and as a growth factor involved in inflammation, wound healing and cell proliferation. Regulates protein trafficking to lysosomes, and also the activity of lysosomal enzymes. Also facilitates the acidification of lysosomes, causing degradation of mature CTSD by CTSB. In addition, functions as a wound-related growth factor that acts directly on dermal fibroblasts and endothelial cells to promote division, migration and the formation of capillary-like tubule structures. Also promotes epithelial cell proliferation by blocking TNF-mediated neutrophil activation preventing release of oxidants and proteases. Moreover, modulates inflammation in neurons by preserving neurons survival, axonal outgrowth and neuronal integrity. In terms of biological role, inhibits epithelial cell proliferation and induces epithelial cells to secrete IL-8. Functionally, stabilizes CTSD through interaction with CTSD leading to maintain its aspartic-type peptidase activity. This is Progranulin (Grn) from Rattus norvegicus (Rat).